The chain runs to 590 residues: Dystrobrevin-1 (590 aa).

Residues 1–10 are compositionally biased toward gly residues; the sequence is MLWSNGGGGP. A disordered region spans residues 1-25; the sequence is MLWSNGGGGPREPSSAPSPDHHRAM. The ZZ-type zinc-finger motif lies at 259-315; sequence YHPVVCDACQVRSFTGFRYKCQRCANYQLCQSCFWRGRTSQNHSNEHEMKEYSSYKS. Zn(2+)-binding residues include cysteine 264, cysteine 267, cysteine 279, cysteine 282, cysteine 288, cysteine 291, histidine 301, and histidine 305. Residues 434-508 are a coiled coil; sequence SMVGDERTLI…EHLMAQLNTG (75 aa). An essential for interaction with ctn-1 region spans residues 468-590; that stretch reads DGLAGLRDRK…DENGVTINGF (123 aa). An essential for interaction with dys-1 region spans residues 484 to 490; it reads MFEMQQR.

Belongs to the dystrophin family. Dystrobrevin subfamily. As to quaternary structure, component of the dystrophin glycoprotein complex (DGC). Interacts with dystrophin (dys-1) and syntrophin (stn-1) to form the DGC. Interacts (via C-terminus) with ctn-1 (via N-terminus); the interaction is required for localization of the dystrophin complex and ctn-1 near dense bodies in muscle cells. As to expression, from late embryogenesis to adulthood, expressed in neurons and muscles; particularly strong in the ventral nerve cord and in muscles of the body wall, head pharyngeal, and vulva; weaker in the intestinal muscle (at protein level).

The protein localises to the cytoplasm. In terms of biological role, plays a role in cholinergic transmission and as a functional partner of dystrophin (dys-1), necessary for muscle maintenance. Required for localization of ctn-1 near dense bodies in muscle cells. This is Dystrobrevin-1 from Caenorhabditis elegans.